A 387-amino-acid polypeptide reads, in one-letter code: MTVLKMTDLDLKGKRVLIREDLNVPVKDGQVQSDARIKAALPTLKLALEKGAAVMVCSHLGRPTEGEFSAENSLKPVAEYLSKALGREVPLLADYLDGVEVKAGDLVLFENVRFNKGEKKNADELAQKYAALCDVFVMDAFGTAHRAEGSTHGVARFAKVAAAGPLLAAELDALGKALGNPARPMAAIVAGSKVSTKLDVLNSLAGICDQLIVGGGIANTFLAAAGHKVGKSLYEADLVETAKAIAAKVKVPLPVDVVVAKEFAESAVATVKAIAEVADDDMILDIGPQTAAQFAELLKTSKTILWNGPVGVFEFDQFGEGTRTLANAIADSAAFSIAGGGDTLAAIDKYGIAERISYISTGGGAFLEFVEGKVLPAVEILEQRAKG.

Substrate contacts are provided by residues Asp-21 to Asn-23, Arg-36, His-59 to Arg-62, Arg-113, and Arg-146. ATP contacts are provided by residues Lys-197, Glu-314, and Gly-340–Thr-343.

Belongs to the phosphoglycerate kinase family. In terms of assembly, monomer.

The protein localises to the cytoplasm. The enzyme catalyses (2R)-3-phosphoglycerate + ATP = (2R)-3-phospho-glyceroyl phosphate + ADP. It functions in the pathway carbohydrate degradation; glycolysis; pyruvate from D-glyceraldehyde 3-phosphate: step 2/5. The polypeptide is Phosphoglycerate kinase (Pseudomonas aeruginosa (strain ATCC 15692 / DSM 22644 / CIP 104116 / JCM 14847 / LMG 12228 / 1C / PRS 101 / PAO1)).